Consider the following 116-residue polypeptide: uncharacterized protein (116 aa).

Transmembrane regions (helical) follow at residues 55 to 77 (LSYS…LYSF) and 87 to 109 (FSYG…YAAL).

It localises to the membrane. This is an uncharacterized protein from Saccharomyces cerevisiae (strain ATCC 204508 / S288c) (Baker's yeast).